Here is a 244-residue protein sequence, read N- to C-terminus: Tegument protein UL51 (244 aa).

A lipid anchor (S-palmitoyl cysteine; by host) is attached at Cys-9. The tract at residues 178 to 244 is disordered; the sequence is GVTEAPSLGH…SRAAPCVLGQ (67 aa). Residues 221–244 show a composition bias toward low complexity; the sequence is PRPTASPTAPRPGPSRAAPCVLGQ.

It belongs to the herpesviridae UL51 family. Oligomerizes. Interacts with UL7; this interaction mediates UL7 incorporation to virions. Interacts with UL14. Post-translationally, phosphorylated. In terms of processing, palmitoylation is necessary for Golgi localization.

Its subcellular location is the virion tegument. It localises to the host cytoplasm. It is found in the host Golgi apparatus. In terms of biological role, plays several roles during the time course of infection, including egress of virus particles from the perinuclear space and secondary envelopment of cytoplasmic capsids that bud into specific trans-Golgi network (TGN)-derived membranes. Plays also an essential role in the maintenance of host cytoplasmic viral assembly center (cVAC) morphology in primary host neuronal cells. This chain is Tegument protein UL51, found in Homo sapiens (Human).